The sequence spans 328 residues: Delta-aminolevulinic acid dehydratase (328 aa).

Zn(2+) is bound by residues C122, C124, and C132. The Schiff-base intermediate with substrate role is filled by K197. Positions 207 and 219 each coordinate 5-aminolevulinate. A Mg(2+)-binding site is contributed by E235. The active-site Schiff-base intermediate with substrate is K250. Positions 276 and 315 each coordinate 5-aminolevulinate.

This sequence belongs to the ALAD family. Homooctamer. The cofactor is Zn(2+).

It catalyses the reaction 2 5-aminolevulinate = porphobilinogen + 2 H2O + H(+). It participates in porphyrin-containing compound metabolism; protoporphyrin-IX biosynthesis; coproporphyrinogen-III from 5-aminolevulinate: step 1/4. Functionally, catalyzes an early step in the biosynthesis of tetrapyrroles. Binds two molecules of 5-aminolevulinate per subunit, each at a distinct site, and catalyzes their condensation to form porphobilinogen. The sequence is that of Delta-aminolevulinic acid dehydratase (hemB) from Halalkalibacterium halodurans (strain ATCC BAA-125 / DSM 18197 / FERM 7344 / JCM 9153 / C-125) (Bacillus halodurans).